The sequence spans 602 residues: Elongation factor 4 (602 aa).

One can recognise a tr-type G domain in the interval 7–189 (ARLRNFCIIA…SVVDRIPPPK (183 aa)). GTP-binding positions include 19–24 (DHGKST) and 136–139 (NKVD).

The protein belongs to the TRAFAC class translation factor GTPase superfamily. Classic translation factor GTPase family. LepA subfamily.

It localises to the cell inner membrane. The enzyme catalyses GTP + H2O = GDP + phosphate + H(+). Required for accurate and efficient protein synthesis under certain stress conditions. May act as a fidelity factor of the translation reaction, by catalyzing a one-codon backward translocation of tRNAs on improperly translocated ribosomes. Back-translocation proceeds from a post-translocation (POST) complex to a pre-translocation (PRE) complex, thus giving elongation factor G a second chance to translocate the tRNAs correctly. Binds to ribosomes in a GTP-dependent manner. This is Elongation factor 4 from Prochlorococcus marinus (strain SARG / CCMP1375 / SS120).